The chain runs to 1097 residues: Protein kinase C-like 1 (1097 aa).

2 REM-1 domains span residues 2 to 76 and 106 to 183; these read STSQ…QMQR and KYEC…FSIN. In terms of domain architecture, C2 spans 189 to 311; that stretch reads RDYEIMDSTK…AKDQGSSGWL (123 aa). Positions 304–359 are disordered; sequence DQGSSGWLPAANLPQTGGSGAGTGSSMTGGASYGATSPLPAHNDLRPSVSPSSDAK. Over residues 327 to 340 the composition is skewed to low complexity; sequence GSSMTGGASYGATS. 2 consecutive Phorbol-ester/DAG-type zinc fingers follow at residues 415–462 and 480–530; these read GHQF…VTKC and PHRF…PDFC. 3 disordered regions span residues 548–594, 615–646, and 724–763; these read KVSP…LRPA, YQEP…LSFE, and ETSH…RRKR. The span at 574–583 shows a compositional bias: basic and acidic residues; the sequence is PSMDSEETLH. Positions 730–741 are enriched in low complexity; the sequence is QQNQQVQQVQQQ. Basic residues predominate over residues 747-763; that stretch reads QRTHSSGKSGKSKRRKR. The Protein kinase domain occupies 770–1029; it reads FQFLAVLGKG…AEEIMEHPYF (260 aa). ATP contacts are provided by residues 776–784 and K799; that span reads LGKGNFGKV. D895 acts as the Proton acceptor in catalysis. One can recognise an AGC-kinase C-terminal domain in the interval 1030–1097; sequence HDVNFDDVLN…FSHISDNATI (68 aa).

It belongs to the protein kinase superfamily. AGC Ser/Thr protein kinase family. PKC subfamily.

The enzyme catalyses L-seryl-[protein] + ATP = O-phospho-L-seryl-[protein] + ADP + H(+). It carries out the reaction L-threonyl-[protein] + ATP = O-phospho-L-threonyl-[protein] + ADP + H(+). Necessary for osmotic stability. This is Protein kinase C-like 1 (PKC1) from Candida albicans (Yeast).